The sequence spans 404 residues: Nuclear receptor subfamily 2 group F member 6 (404 aa).

Residues 1 to 15 (MAMVTGGWGGPGGDT) show a composition bias toward gly residues. Residues 1–49 (MAMVTGGWGGPGGDTNGVDKAGGYPRAAEDDSASPPGAASDAEPGDEER) are disordered. The segment covering 33-42 (ASPPGAASDA) has biased composition (low complexity). Phosphoserine occurs at positions 34 and 40. The segment at residues 53-128 (QVDCVVCGDK…VGMRKEAVQR (76 aa)) is a DNA-binding region (nuclear receptor). Residues 56-76 (CVVCGDKSSGKHYGVFTCEGC) form an NR C4-type zinc finger. Serine 83 carries the phosphoserine modification. The NR C4-type zinc finger occupies 92–116 (CRSNRDCQIDQHHRNQCQYCRLKKC). In terms of domain architecture, NR LBD spans 165–393 (PVSELIAQLL…TLIRDMLLSG (229 aa)). The interval 327-404 (LQEKAQVALT…TFNWPYGSGQ (78 aa)) is important for dimerization.

Belongs to the nuclear hormone receptor family. NR2 subfamily. As to quaternary structure, binds DNA as dimer; homodimer and heterodimer with NR2F2 and probably NR2F1. Interacts with THRB. In terms of tissue distribution, expressed in heart, placenta, liver, skeletal muscle, kidney and pancreas.

The protein localises to the nucleus. Transcription factor predominantly involved in transcriptional repression. Binds to promoter/enhancer response elements that contain the imperfect 5'-AGGTCA-3' direct or inverted repeats with various spacings which are also recognized by other nuclear hormone receptors. Involved in modulation of hormonal responses. Represses transcriptional activity of the lutropin-choriogonadotropic hormone receptor/LHCGR gene, the renin/REN gene and the oxytocin-neurophysin/OXT gene. Represses the triiodothyronine-dependent and -independent transcriptional activity of the thyroid hormone receptor gene in a cell type-specific manner. The corepressing function towards thyroid hormone receptor beta/THRB involves at least in part the inhibition of THRB binding to triiodothyronine response elements (TREs) by NR2F6. Inhibits NFATC transcription factor DNA binding and subsequently its transcriptional activity. Acts as transcriptional repressor of IL-17 expression in Th-17 differentiated CD4(+) T cells and may be involved in induction and/or maintenance of peripheral immunological tolerance and autoimmunity. Involved in development of forebrain circadian clock; is required early in the development of the locus coeruleus (LC). This Homo sapiens (Human) protein is Nuclear receptor subfamily 2 group F member 6 (NR2F6).